A 111-amino-acid chain; its full sequence is MRQMKRTAYIILLVCVLALWMDSVQAGSSFLSPSQRPQGKDKKPPRVGRRDSDGILDLFMRPPLQDEDIRHITFNTPFEIGITMTEELFQQYGEVMQKIMQDLLMDTPAKE.

A signal peptide spans 1-26 (MRQMKRTAYIILLVCVLALWMDSVQA). Residues 28-37 (SSFLSPSQRP) are compositionally biased toward polar residues. Positions 28-53 (SSFLSPSQRPQGKDKKPPRVGRRDSD) are disordered. A lipid anchor (O-decanoyl serine; alternate) is attached at serine 29. The O-hexanoyl serine; alternate moiety is linked to residue serine 29. Serine 29 carries the O-octanoyl serine; alternate lipid modification. Positions 38–53 (QGKDKKPPRVGRRDSD) are enriched in basic and acidic residues. Valine 47 carries the valine amide modification. The propeptide at 51 to 111 (DSDGILDLFM…DLLMDTPAKE (61 aa)) is removed in mature form.

This sequence belongs to the motilin family. Post-translationally, O-octanoylated by GOAT/MBOAT4. O-octanoylation or O-decanoylation is essential for activity. The O-decanoylated form ghrelin-21-C10 differs in the length of the carbon backbone of the carboxylic acid forming an ester bond with Ser-29. 44% of eel ghrelin is O-decanoylated. As to expression, highest levels in stomach and anterior intestine. Lower levels in posterior intestine, kidney and brain. Low levels in heart, head kidney and middle intestine.

The protein localises to the secreted. Ligand for growth hormone secretagogue receptor type 1 (GHSR). Induces the release of growth hormone from the pituitary. Has an appetite-stimulating effect, induces adiposity and stimulates gastric acid secretion. Involved in growth regulation. The polypeptide is Ghrelin (ghrl) (Anguilla japonica (Japanese eel)).